Consider the following 307-residue polypeptide: B3 domain-containing protein At5g18000 (307 aa).

The segment at residues 20–115 is a DNA-binding region (TF-B3 1); that stretch reads FFKILRREDH…CFNVTIFEAD (96 aa). 2 disordered regions span residues 122 to 141 and 151 to 209; these read PRKTITSSSGRNKREERKSI and IESW…SEAG. Residues 166-177 are compositionally biased toward polar residues; sequence ESTSGRLTQKQE. Residues 178 to 192 are compositionally biased toward basic and acidic residues; it reads LNLRKKEADKTEKSK. A DNA-binding region (TF-B3 2) is located at residues 214-307; the sequence is IPEFKLTIKK…TEMRVKVSKE (94 aa).

The protein resides in the nucleus. The protein is B3 domain-containing protein At5g18000 of Arabidopsis thaliana (Mouse-ear cress).